We begin with the raw amino-acid sequence, 369 residues long: Peptide chain release factor 2 (369 aa).

Position 252 is an N5-methylglutamine (Gln252).

Belongs to the prokaryotic/mitochondrial release factor family. Post-translationally, methylated by PrmC. Methylation increases the termination efficiency of RF2.

The protein localises to the cytoplasm. In terms of biological role, peptide chain release factor 2 directs the termination of translation in response to the peptide chain termination codons UGA and UAA. The sequence is that of Peptide chain release factor 2 from Staphylococcus aureus (strain bovine RF122 / ET3-1).